Reading from the N-terminus, the 132-residue chain is Small ribosomal subunit protein uS8 (132 aa).

It belongs to the universal ribosomal protein uS8 family. As to quaternary structure, part of the 30S ribosomal subunit. Contacts proteins S5 and S12.

Functionally, one of the primary rRNA binding proteins, it binds directly to 16S rRNA central domain where it helps coordinate assembly of the platform of the 30S subunit. The sequence is that of Small ribosomal subunit protein uS8 from Limosilactobacillus reuteri (strain DSM 20016) (Lactobacillus reuteri).